A 417-amino-acid chain; its full sequence is NADH-quinone oxidoreductase subunit D (417 aa).

This sequence belongs to the complex I 49 kDa subunit family. As to quaternary structure, NDH-1 is composed of 14 different subunits. Subunits NuoB, C, D, E, F, and G constitute the peripheral sector of the complex.

Its subcellular location is the cell inner membrane. The catalysed reaction is a quinone + NADH + 5 H(+)(in) = a quinol + NAD(+) + 4 H(+)(out). Its function is as follows. NDH-1 shuttles electrons from NADH, via FMN and iron-sulfur (Fe-S) centers, to quinones in the respiratory chain. The immediate electron acceptor for the enzyme in this species is believed to be ubiquinone. Couples the redox reaction to proton translocation (for every two electrons transferred, four hydrogen ions are translocated across the cytoplasmic membrane), and thus conserves the redox energy in a proton gradient. The chain is NADH-quinone oxidoreductase subunit D from Francisella philomiragia subsp. philomiragia (strain ATCC 25017 / CCUG 19701 / FSC 153 / O#319-036).